We begin with the raw amino-acid sequence, 82 residues long: UPF0213 protein MW0443 (82 aa).

The GIY-YIG domain maps to 2-77; sequence DSHFVYIVKC…KTYTRQKKLR (76 aa).

Belongs to the UPF0213 family.

This chain is UPF0213 protein MW0443, found in Staphylococcus aureus (strain MW2).